We begin with the raw amino-acid sequence, 73 residues long: Small ribosomal subunit protein uS15c (73 aa).

It belongs to the universal ribosomal protein uS15 family. Part of the 30S ribosomal subunit.

It is found in the plastid. It localises to the chloroplast. The protein is Small ribosomal subunit protein uS15c (rps15) of Welwitschia mirabilis (Tree tumbo).